The following is a 233-amino-acid chain: 1-(5-phosphoribosyl)-5-[(5-phosphoribosylamino)methylideneamino] imidazole-4-carboxamide isomerase (233 aa).

Asp-8 (proton acceptor) is an active-site residue. Asp-125 (proton donor) is an active-site residue.

It belongs to the HisA/HisF family.

Its subcellular location is the cytoplasm. The enzyme catalyses 1-(5-phospho-beta-D-ribosyl)-5-[(5-phospho-beta-D-ribosylamino)methylideneamino]imidazole-4-carboxamide = 5-[(5-phospho-1-deoxy-D-ribulos-1-ylimino)methylamino]-1-(5-phospho-beta-D-ribosyl)imidazole-4-carboxamide. The protein operates within amino-acid biosynthesis; L-histidine biosynthesis; L-histidine from 5-phospho-alpha-D-ribose 1-diphosphate: step 4/9. The sequence is that of 1-(5-phosphoribosyl)-5-[(5-phosphoribosylamino)methylideneamino] imidazole-4-carboxamide isomerase from Thermococcus kodakarensis (strain ATCC BAA-918 / JCM 12380 / KOD1) (Pyrococcus kodakaraensis (strain KOD1)).